The primary structure comprises 893 residues: Sulfate permease 2 (893 aa).

Positions 1–25 (MSREGYPNFEEVEIPDFQETNNTVP) are disordered. Residues 1–131 (MSREGYPNFE…VFPIINWLPH (131 aa)) lie on the Cytoplasmic side of the membrane. The helical transmembrane segment at 132-152 (YNFSWFTADLIAGITIGCVLV) threads the bilayer. Over 153-163 (PQSMSYAQVAT) the chain is Extracellular. The helical transmembrane segment at 164–184 (LPAQYGLYSSFIGAYSYSFFA) threads the bilayer. The Cytoplasmic portion of the chain corresponds to 185 to 188 (TSKD). The helical transmembrane segment at 189–209 (VCIGPVAVMSLQTAKVIADVT) threads the bilayer. At 210-221 (AKYPDGDSAITG) the chain is on the extracellular side. A helical transmembrane segment spans residues 222–242 (PVIATTLALLCGIISAAVGFL). Residues 243-244 (RL) lie on the Cytoplasmic side of the membrane. The helical transmembrane segment at 245 to 265 (GFLVELISLNAVAGFMTGSAF) threads the bilayer. Residues 266–305 (NILWGQVPALMGYNSLVNTRAATYKVVIETLKHLPDTKLD) are Extracellular-facing. Residues 306–326 (AVFGLIPLFLLYVWKWWCGTY) traverse the membrane as a helical segment. At 327–350 (GPRLNDRYNSKNPRLHKIIKWTYF) the chain is on the cytoplasmic side. The helical transmembrane segment at 351-371 (YAQASRNGIIIIVFTCIGWAI) threads the bilayer. Residues 372 to 399 (TRGKSKSERPISILGSVPSGLKEVGVFH) are Extracellular-facing. The chain crosses the membrane as a helical span at residues 400-420 (VPPGLMSKLGPNLPASIIVLL). The Cytoplasmic portion of the chain corresponds to 421–443 (LEHIAISKSFGRINDYKVVPDQE). The helical transmembrane segment at 444-464 (LIAIGVSNLLGTFFNAYPATG) threads the bilayer. The Extracellular segment spans residues 465–483 (SFSRSALKAKCNVRTPLSG). The chain crosses the membrane as a helical span at residues 484 to 504 (LFSGSCVLLALYCLTGAFFYI). Residues 505 to 532 (PKATLSAVIIHAVSDLLASYQTTWNFWK) are Cytoplasmic-facing. Residues 533–551 (MNPLDFICFIVTVLITVFA) traverse the membrane as a helical segment. Residues 552 to 559 (SIEDGIYF) are Extracellular-facing. Residues 560-580 (AMCWSCAMLILKVAFPAGKFL) traverse the membrane as a helical segment. The Cytoplasmic portion of the chain corresponds to 581 to 893 (GRVEVAEVTD…DIPDFAKWDI (313 aa)). The region spanning 676 to 854 (DVQILPPPDG…SIVAGHTSYH (179 aa)) is the STAS domain.

The protein belongs to the SLC26A/SulP transporter (TC 2.A.53) family.

It localises to the membrane. High affinity uptake of sulfate into the cell. The chain is Sulfate permease 2 (SUL2) from Saccharomyces cerevisiae (strain ATCC 204508 / S288c) (Baker's yeast).